The chain runs to 384 residues: DNA dC-&gt;dU-editing enzyme APOBEC-3G (384 aa).

The essential for cytoplasmic localization stretch occupies residues 1–60; sequence MNPQFRNMVDGMDPHKFSYNFKNRPILSRRNTVWLCYEVKTKGPSRPPLDAKIFRGQVYF. CMP/dCMP-type deaminase domains lie at 29–138 and 214–328; these read RRNT…LRSL and GRHE…LRTL. Residue Thr32 is modified to Phosphothreonine; by PKA. Residues His65, Cys97, and Cys100 each contribute to the Zn(2+) site. The tract at residues 209–336 is necessary for homooligomerization; the sequence is EPCVEGRHET…TLDEAEAKIS (128 aa). Residues 213–215 are interaction with DNA; it reads EGR. Residue Thr218 is modified to Phosphothreonine; by PKA and CAMK2. His257 serves as a coordination point for Zn(2+). The active-site Proton donor is the Glu259. Zn(2+) is bound by residues Cys288 and Cys291. The interaction with DNA stretch occupies residues 313-320; that stretch reads RIYDDQGR.

The protein belongs to the cytidine and deoxycytidylate deaminase family. In terms of assembly, homodimer. Zn(2+) is required as a cofactor.

It is found in the cytoplasm. It localises to the nucleus. The protein localises to the P-body. It carries out the reaction a 2'-deoxycytidine in single-stranded DNA + H2O + H(+) = a 2'-deoxyuridine in single-stranded DNA + NH4(+). Its function is as follows. DNA deaminase (cytidine deaminase) which acts as an inhibitor of retrovirus replication and retrotransposon mobility. After the penetration of retroviral nucleocapsids into target cells of infection and the initiation of reverse transcription, it can induce the conversion of cytosine to uracil in the minus-sense single-strand viral DNA, leading to G-to-A hypermutations in the subsequent plus-strand viral DNA. The resultant detrimental levels of mutations in the proviral genome, along with a deamination-independent mechanism that works prior to the proviral integration, together exert efficient antiretroviral effects in infected target cells. Selectively targets single-stranded DNA and does not deaminate double-stranded DNA or single- or double-stranded RNA. This is DNA dC-&gt;dU-editing enzyme APOBEC-3G (APOBEC3G) from Pongo pygmaeus (Bornean orangutan).